Consider the following 143-residue polypeptide: Putative pre-16S rRNA nuclease (143 aa).

It belongs to the YqgF nuclease family.

The protein localises to the cytoplasm. Could be a nuclease involved in processing of the 5'-end of pre-16S rRNA. The chain is Putative pre-16S rRNA nuclease from Mycoplasma capricolum subsp. capricolum (strain California kid / ATCC 27343 / NCTC 10154).